Consider the following 324-residue polypeptide: Malate dehydrogenase (324 aa).

Residues 21 to 26 (GAGRVG) and D45 contribute to the NAD(+) site. The substrate site is built by R94 and R100. Residues N107 and 130–132 (VTN) each bind NAD(+). Positions 132 and 163 each coordinate substrate. H187 acts as the Proton acceptor in catalysis.

This sequence belongs to the LDH/MDH superfamily. MDH type 3 family.

The enzyme catalyses (S)-malate + NAD(+) = oxaloacetate + NADH + H(+). Functionally, catalyzes the reversible oxidation of malate to oxaloacetate. This Trichormus variabilis (strain ATCC 29413 / PCC 7937) (Anabaena variabilis) protein is Malate dehydrogenase.